Here is a 507-residue protein sequence, read N- to C-terminus: Eukaryotic translation initiation factor 4E-binding protein Mextli homolog (507 aa).

A disordered region spans residues 126–163 (RPEGQHDPAPTVGIPPSATSPPTQVTSSVTSPVPSSPQ). Positions 140 to 158 (PPSATSPPTQVTSSVTSPV) are enriched in low complexity. Residues 242–307 (QLRHEMIIRN…EDIERAKDMI (66 aa)) enclose the KH domain. 2 disordered regions span residues 314 to 360 (NMSP…DEDI) and 395 to 424 (ARPS…QQEP). A compositionally biased stretch (polar residues) spans 329–348 (QYSGMSSENQSIPSQQNTAN). Residues 349–360 (IDEDDDDDDEDI) are compositionally biased toward acidic residues.

As to quaternary structure, interacts with eukaryotic translation initiation factor ife-3.

The protein localises to the cytoplasm. Functionally, plays a role in promoting translation. This is Eukaryotic translation initiation factor 4E-binding protein Mextli homolog from Caenorhabditis elegans.